Here is a 529-residue protein sequence, read N- to C-terminus: Bifunctional purine biosynthesis protein PurH (529 aa).

In terms of domain architecture, MGS-like spans 1–148 (MQQRRPVRRA…KNHKDVAIVV (148 aa)). Lys-287 is modified (N6-acetyllysine).

It belongs to the PurH family.

The enzyme catalyses (6R)-10-formyltetrahydrofolate + 5-amino-1-(5-phospho-beta-D-ribosyl)imidazole-4-carboxamide = 5-formamido-1-(5-phospho-D-ribosyl)imidazole-4-carboxamide + (6S)-5,6,7,8-tetrahydrofolate. The catalysed reaction is IMP + H2O = 5-formamido-1-(5-phospho-D-ribosyl)imidazole-4-carboxamide. The protein operates within purine metabolism; IMP biosynthesis via de novo pathway; 5-formamido-1-(5-phospho-D-ribosyl)imidazole-4-carboxamide from 5-amino-1-(5-phospho-D-ribosyl)imidazole-4-carboxamide (10-formyl THF route): step 1/1. Its pathway is purine metabolism; IMP biosynthesis via de novo pathway; IMP from 5-formamido-1-(5-phospho-D-ribosyl)imidazole-4-carboxamide: step 1/1. The polypeptide is Bifunctional purine biosynthesis protein PurH (Escherichia fergusonii (strain ATCC 35469 / DSM 13698 / CCUG 18766 / IAM 14443 / JCM 21226 / LMG 7866 / NBRC 102419 / NCTC 12128 / CDC 0568-73)).